The primary structure comprises 665 residues: mRNA cleavage and polyadenylation factor CLP1 (665 aa).

ATP contacts are provided by residues K91 and 195 to 200 (SAGKTS). Disordered stretches follow at residues 218–283 (VKEG…SQAK) and 593–615 (PPPR…HDYE). 2 stretches are compositionally biased toward basic and acidic residues: residues 219-238 (KEGD…EIHP) and 598-614 (QSKD…HHDY).

The protein belongs to the Clp1 family. Clp1 subfamily. Component of a pre-mRNA cleavage factor complex. Interacts directly with PCF11.

It localises to the nucleus. In terms of biological role, required for endonucleolytic cleavage during polyadenylation-dependent pre-mRNA 3'-end formation. The sequence is that of mRNA cleavage and polyadenylation factor CLP1 from Malassezia globosa (strain ATCC MYA-4612 / CBS 7966) (Dandruff-associated fungus).